A 229-amino-acid chain; its full sequence is DNA repair protein RecO (229 aa).

The protein belongs to the RecO family.

In terms of biological role, involved in DNA repair and RecF pathway recombination. The protein is DNA repair protein RecO of Legionella pneumophila (strain Lens).